The sequence spans 1133 residues: Guanine nucleotide-binding protein G(s) subunit alpha isoforms XLas (1133 aa).

Disordered stretches follow at residues 1 to 195, 322 to 552, 611 to 648, and 724 to 744; these read MGMF…PEAL, DDTA…VPGA, SASA…WPDK, and RSRS…RKQM. Positions 31-48 are enriched in low complexity; it reads LEAPGAAAPGAGAGPAEE. Residues 347 to 362 show a composition bias toward basic and acidic residues; it reads DKSECAERPPVEREAA. Composition is skewed to low complexity over residues 391-404, 459-471, 482-498, 515-525, and 535-552; these read PEAM…AAQA, GGAA…TPAE, AEPA…ESAS, ATLAEPAARAA, and RAVP…VPGA. Over residues 633–643 the composition is skewed to pro residues; the sequence is PPTPRPPPRPT. Positions 732-744 are enriched in basic and acidic residues; that stretch reads KAKDPMEERRKQM. A coiled-coil region spans residues 737–761; it reads MEERRKQMRKEAIEMREQKRADKKR. The region spanning 778 to 1133 is the G-alpha domain; sequence CTHRLLLLGA…RMHLRQYELL (356 aa). Positions 781-794 are G1 motif; the sequence is RLLLLGAGESGKST. Position 786-794 (786-794) interacts with GTP; sequence GAGESGKST. S793 is a Mg(2+) binding site. The disordered stretch occupies residues 807 to 828; sequence FNGEGGEEDPQAARSNSDGEKA. Residues 935 to 943 form a G2 motif region; the sequence is DLLRCRVLT. GTP-binding positions include 936 to 943, 962 to 966, and 1031 to 1034; these read LLRCRVLT, DVGGQ, and NKQD. R940 carries the ADP-ribosylarginine; by cholera toxin modification. Mg(2+) is bound at residue T943. Positions 958-967 are G3 motif; it reads FHMFDVGGQR. The segment at 1027–1034 is G4 motif; it reads ILFLNKQD. S1091 carries the post-translational modification Phosphoserine. The G5 motif stretch occupies residues 1103-1108; sequence TCAVDT. A1105 is a GTP binding site.

This sequence belongs to the G-alpha family. G(s) subfamily. G proteins are composed of 3 units; alpha, beta and gamma. The alpha chain contains the guanine nucleotide binding site. Interacts through its N-terminal region with ALEX which is produced from the same locus in a different open reading frame. This interaction may inhibit its adenylyl cyclase-stimulating activity. Interacts with MAGED2.

It is found in the cell membrane. It localises to the apical cell membrane. The enzyme catalyses GTP + H2O = GDP + phosphate + H(+). Its function is as follows. Guanine nucleotide-binding proteins (G proteins) function as transducers in numerous signaling pathways controlled by G protein-coupled receptors (GPCRs). The alpha chain contains the guanine nucleotide binding site and alternates between an active, GTP-bound state and an inactive, GDP-bound state. Signaling by an activated GPCR promotes GDP release and GTP binding. The alpha subunit has a low GTPase activity that converts bound GTP to GDP, thereby terminating the signal. Both GDP release and GTP hydrolysis are modulated by numerous regulatory proteins. Signaling involves the activation of adenylyl cyclases, resulting in increased levels of the signaling molecule cAMP. GNAS functions downstream of several GPCRs, including beta-adrenergic receptors. XLas isoforms interact with the same set of receptors as Gnas isoforms. The chain is Guanine nucleotide-binding protein G(s) subunit alpha isoforms XLas from Mus musculus (Mouse).